A 547-amino-acid chain; its full sequence is ATP synthase subunit alpha (547 aa).

172–179 (GDRKTGKT) is an ATP binding site.

Belongs to the ATPase alpha/beta chains family. F-type ATPases have 2 components, CF(1) - the catalytic core - and CF(0) - the membrane proton channel. CF(1) has five subunits: alpha(3), beta(3), gamma(1), delta(1), epsilon(1). CF(0) has three main subunits: a(1), b(2) and c(9-12). The alpha and beta chains form an alternating ring which encloses part of the gamma chain. CF(1) is attached to CF(0) by a central stalk formed by the gamma and epsilon chains, while a peripheral stalk is formed by the delta and b chains.

It is found in the cell membrane. It catalyses the reaction ATP + H2O + 4 H(+)(in) = ADP + phosphate + 5 H(+)(out). Its function is as follows. Produces ATP from ADP in the presence of a proton gradient across the membrane. The alpha chain is a regulatory subunit. The polypeptide is ATP synthase subunit alpha (Rhodococcus jostii (strain RHA1)).